A 280-amino-acid chain; its full sequence is F420-dependent methylenetetrahydromethanopterin dehydrogenase (280 aa).

Belongs to the MTD family.

It catalyses the reaction 5,10-methylenetetrahydromethanopterin + oxidized coenzyme F420-(gamma-L-Glu)(n) + 2 H(+) = 5,10-methenyl-5,6,7,8-tetrahydromethanopterin + reduced coenzyme F420-(gamma-L-Glu)(n). The protein operates within one-carbon metabolism; methanogenesis from CO(2); 5,10-methylene-5,6,7,8-tetrahydromethanopterin from 5,10-methenyl-5,6,7,8-tetrahydromethanopterin (coenzyme F420 route): step 1/1. In terms of biological role, catalyzes the reversible reduction of methenyl-H(4)MPT(+) to methylene-H(4)MPT. The polypeptide is F420-dependent methylenetetrahydromethanopterin dehydrogenase (Methanospirillum hungatei JF-1 (strain ATCC 27890 / DSM 864 / NBRC 100397 / JF-1)).